A 219-amino-acid chain; its full sequence is 2-hydroxy-3-keto-5-methylthiopentenyl-1-phosphate phosphatase (219 aa).

The protein belongs to the HAD-like hydrolase superfamily. MtnX family.

It carries out the reaction 2-hydroxy-5-methylsulfanyl-3-oxopent-1-enyl phosphate + H2O = 1,2-dihydroxy-5-(methylsulfanyl)pent-1-en-3-one + phosphate. Its pathway is amino-acid biosynthesis; L-methionine biosynthesis via salvage pathway; L-methionine from S-methyl-5-thio-alpha-D-ribose 1-phosphate: step 4/6. In terms of biological role, dephosphorylates 2-hydroxy-3-keto-5-methylthiopentenyl-1-phosphate (HK-MTPenyl-1-P) yielding 1,2-dihydroxy-3-keto-5-methylthiopentene (DHK-MTPene). This Bacillus cereus (strain B4264) protein is 2-hydroxy-3-keto-5-methylthiopentenyl-1-phosphate phosphatase.